A 312-amino-acid chain; its full sequence is Regulation of nuclear pre-mRNA domain-containing protein 1A (312 aa).

Residue S2 is modified to N-acetylserine. Positions 2–133 constitute a CID domain; sequence SAFSEAALEK…QLKHALYGDK (132 aa). A phosphoserine mark is found at S153, S156, and S285. Residues 244–286 are a coiled coil; it reads LADFLRCQKEALAEKEHKLEEYKRKLARVSLVRKELRARIQSL.

It belongs to the UPF0400 (RTT103) family. May form a heterodimer with RPRD1B. Associates with the RNA polymerase II subunit POLR2A (via CTD phosphorylated at 'Ser-2' and 'Ser-7' of the heptad repeats).

Its subcellular location is the nucleus. Its function is as follows. Interacts with phosphorylated C-terminal heptapeptide repeat domain (CTD) of the largest RNA polymerase II subunit POLR2A, and participates in dephosphorylation of the CTD by RPAP2. May act as a negative regulator of cyclin-D1 (CCND1) and cyclin-E (CCNE1) in the cell cycle. The sequence is that of Regulation of nuclear pre-mRNA domain-containing protein 1A (Rprd1a) from Mus musculus (Mouse).